The sequence spans 235 residues: Putative 4'-phosphopantetheinyl transferase HI_0152 (235 aa).

Residues Asp112, Glu114, and Glu155 each coordinate Mg(2+).

The protein belongs to the P-Pant transferase superfamily. Gsp/Sfp/HetI/AcpT family. Requires Mg(2+) as cofactor.

May transfer the 4'-phosphopantetheine moiety from coenzyme A (CoA) to a serine residue of a carrier protein domain. The sequence is that of Putative 4'-phosphopantetheinyl transferase HI_0152 from Haemophilus influenzae (strain ATCC 51907 / DSM 11121 / KW20 / Rd).